Consider the following 438-residue polypeptide: Ribosomal protein uS12 methylthiotransferase RimO (438 aa).

The region spanning 4-114 (PRVSFVSLGC…VMNAVHEVAP (111 aa)) is the MTTase N-terminal domain. [4Fe-4S] cluster-binding residues include C13, C49, C78, C146, C150, and C153. A Radical SAM core domain is found at 132 to 370 (LTPRHYAYLK…MAKQQQISTN (239 aa)). Residues 373-438 (KKKVGKRLPV…DAYDLHGTAV (66 aa)) form the TRAM domain.

It belongs to the methylthiotransferase family. RimO subfamily. [4Fe-4S] cluster serves as cofactor.

Its subcellular location is the cytoplasm. The enzyme catalyses L-aspartate(89)-[ribosomal protein uS12]-hydrogen + (sulfur carrier)-SH + AH2 + 2 S-adenosyl-L-methionine = 3-methylsulfanyl-L-aspartate(89)-[ribosomal protein uS12]-hydrogen + (sulfur carrier)-H + 5'-deoxyadenosine + L-methionine + A + S-adenosyl-L-homocysteine + 2 H(+). Its function is as follows. Catalyzes the methylthiolation of an aspartic acid residue of ribosomal protein uS12. In Brucella ovis (strain ATCC 25840 / 63/290 / NCTC 10512), this protein is Ribosomal protein uS12 methylthiotransferase RimO.